A 91-amino-acid chain; its full sequence is Probable Fe(2+)-trafficking protein (91 aa).

Belongs to the Fe(2+)-trafficking protein family.

Its function is as follows. Could be a mediator in iron transactions between iron acquisition and iron-requiring processes, such as synthesis and/or repair of Fe-S clusters in biosynthetic enzymes. The protein is Probable Fe(2+)-trafficking protein of Burkholderia ambifaria (strain MC40-6).